The sequence spans 112 residues: 2Fe-2S ferredoxin (112 aa).

The 2Fe-2S ferredoxin-type domain maps to 5–107 (IKVTFIINDG…GIKVHLPAAT (103 aa)). The [2Fe-2S] cluster site is built by Cys-42, Cys-48, Cys-51, and Cys-88.

Belongs to the adrenodoxin/putidaredoxin family. [2Fe-2S] cluster is required as a cofactor.

In terms of biological role, ferredoxin are iron-sulfur proteins that transfer electrons in a wide variety of metabolic reactions. This Rickettsia rickettsii protein is 2Fe-2S ferredoxin (fdxB).